Here is a 202-residue protein sequence, read N- to C-terminus: Small ribosomal subunit protein uS4c-1 (202 aa).

In terms of domain architecture, S4 RNA-binding spans 90 to 152; it reads MRLDNIVLRA…NKSRQLIDLN (63 aa).

This sequence belongs to the universal ribosomal protein uS4 family. In terms of assembly, part of the 30S ribosomal subunit. Contacts protein S5. The interaction surface between S4 and S5 is involved in control of translational fidelity.

The protein resides in the plastid. The protein localises to the chloroplast. Functionally, one of the primary rRNA binding proteins, it binds directly to 16S rRNA where it nucleates assembly of the body of the 30S subunit. With S5 and S12 plays an important role in translational accuracy. The sequence is that of Small ribosomal subunit protein uS4c-1 from Cyanidium caldarium (Red alga).